A 342-amino-acid polypeptide reads, in one-letter code: (Lyso)-N-acylphosphatidylethanolamine lipase (342 aa).

The AB hydrolase-1 domain occupies 70 to 324 (PLVMVHGFGG…IEGASHHVYA (255 aa)).

It belongs to the peptidase S33 family. ABHD4/ABHD5 subfamily.

It carries out the reaction N-hexadecanoyl-1,2-di-(9Z-octadecenoyl)-sn-glycero-3-phosphoethanolamine + H2O = N-hexadecanoyl-1-(9Z-octadecenoyl)-sn-glycero-3-phosphoethanolamine + (9Z)-octadecenoate + H(+). The catalysed reaction is an N-acyl-1,2-diacyl-sn-glycero-3-phosphoethanolamine + H2O = N,1-diacyl-sn-glycero-3-phosphoethanolamine + a fatty acid + H(+). It catalyses the reaction N-hexadecanoyl-1-(9Z-octadecenoyl)-sn-glycero-3-phosphoethanolamine + H2O = N-hexadecanoyl-sn-glycero-3-phosphoethanolamine + (9Z)-octadecenoate + H(+). The enzyme catalyses N-octadecanoyl-1-(9Z-octadecenoyl)-sn-glycero-3-phosphoethanolamine + H2O = N-octadecanoyl-sn-glycero-3-phospho-ethanolamine + (9Z)-octadecenoate + H(+). It carries out the reaction N-eicosanoyl-1-(9Z-octadecenoyl)-sn-glycero-3-phosphoethanolamine + H2O = N-eicosanoyl-sn-glycero-3-phosphoethanolamine + (9Z)-octadecenoate + H(+). The catalysed reaction is N,1-di-(9Z-octadecenoyl)-sn-glycero-3-phosphoethanolamine + H2O = N-(9Z-octadecenoyl)-sn-glycero-3-phosphoethanolamine + (9Z)-octadecenoate + H(+). It catalyses the reaction N-(5Z,8Z,11Z,14Z-eicosatetraenoyl)-1-(9Z-octadecenoyl)-sn-glycero-3-phosphoethanolamine + H2O = N-(5Z,8Z,11Z,14Z-eicosatetraenoyl)-sn-glycero-3-phosphoethanolamine + (9Z)-octadecenoate + H(+). The enzyme catalyses 1-octadecanoyl-2-(9Z-octadecenoyl)-sn-glycero-3-phospho-(N-hexadecanoyl)-serine + H2O = 1-octadecanoyl-2-hydroxy-sn-glycero-3-phospho-(N-hexadecanoyl)-serine + (9Z)-octadecenoate + H(+). It carries out the reaction 1-O-(1Z-octadecenoyl)-2-(9Z-octadecenoyl)-sn-glycero-3-phospho-N-hexadecanoyl-ethanolamine + H2O = 1-O-(1Z-octadecenyl)-sn-glycero-3-phospho-N-hexadecanoyl-ethanolamine + (9Z)-octadecenoate + H(+). The catalysed reaction is N,1-diacyl-sn-glycero-3-phosphoethanolamine + H2O = N-acyl-sn-glycero-3-phosphoethanolamine + a fatty acid + H(+). In terms of biological role, lysophospholipase selective for N-acyl phosphatidylethanolamine (NAPE). Contributes to the biosynthesis of N-acyl ethanolamines, including the endocannabinoid anandamide by hydrolyzing the sn-1 and sn-2 acyl chains from N-acyl phosphatidylethanolamine (NAPE) generating glycerophospho-N-acyl ethanolamine (GP-NAE), an intermediate for N-acyl ethanolamine biosynthesis. Hydrolyzes substrates bearing saturated, monounsaturated, polyunsaturated N-acyl chains. Shows no significant activity towards other lysophospholipids, including lysophosphatidylcholine, lysophosphatidylethanolamine and lysophosphatidylserine. This is (Lyso)-N-acylphosphatidylethanolamine lipase from Bos taurus (Bovine).